The sequence spans 187 residues: Guanylate kinase (187 aa).

Serine 2 carries the N-acetylserine modification. The Guanylate kinase-like domain occupies 2-184 (SRPIVISGPS…AYKELKDFIF (183 aa)). ATP is bound at residue 9–16 (GPSGTGKS). GMP-binding positions include serine 35, 39 to 42 (RTPR), tyrosine 51, glutamate 70, 79 to 81 (YGS), and aspartate 101. Serine 149 is subject to Phosphoserine. A Phosphotyrosine modification is found at tyrosine 157.

Belongs to the guanylate kinase family. As to quaternary structure, monomer.

The catalysed reaction is GMP + ATP = GDP + ADP. In terms of biological role, catalyzes the reversible transfer of the terminal phosphoryl group of ATP to the acceptor molecule GMP. Essential for recycling GMP and indirectly, cGMP. The chain is Guanylate kinase (GUK1) from Saccharomyces cerevisiae (strain ATCC 204508 / S288c) (Baker's yeast).